A 108-amino-acid chain; its full sequence is PTS system galactose-specific EIIB component (108 aa).

Residues 3–108 (DKVIALACAA…VLAAAENLMN (106 aa)) form the PTS EIIB type-3 domain. The active-site Phosphocysteine intermediate is the Cys-10. At Cys-10 the chain carries Phosphocysteine; by EIIA.

The catalysed reaction is N(pros)-phospho-L-histidyl-[protein] + D-galactose(out) = D-galactose 6-phosphate(in) + L-histidyl-[protein]. Functionally, the phosphoenolpyruvate-dependent sugar phosphotransferase system (sugar PTS), a major carbohydrate active transport system, catalyzes the phosphorylation of incoming sugar substrates concomitantly with their translocation across the cell membrane. Involved in galactose transport with PtcA and Lmg_0963. The sequence is that of PTS system galactose-specific EIIB component from Lactococcus lactis subsp. cremoris (strain MG1363).